Consider the following 237-residue polypeptide: 2,3,4,5-tetrahydropyridine-2,6-dicarboxylate N-acetyltransferase (237 aa).

The protein belongs to the transferase hexapeptide repeat family. DapH subfamily.

The enzyme catalyses (S)-2,3,4,5-tetrahydrodipicolinate + acetyl-CoA + H2O = L-2-acetamido-6-oxoheptanedioate + CoA. It functions in the pathway amino-acid biosynthesis; L-lysine biosynthesis via DAP pathway; LL-2,6-diaminopimelate from (S)-tetrahydrodipicolinate (acetylase route): step 1/3. Functionally, catalyzes the transfer of an acetyl group from acetyl-CoA to tetrahydrodipicolinate. The polypeptide is 2,3,4,5-tetrahydropyridine-2,6-dicarboxylate N-acetyltransferase (Limosilactobacillus fermentum (strain NBRC 3956 / LMG 18251) (Lactobacillus fermentum)).